We begin with the raw amino-acid sequence, 392 residues long: Immunoglobulin-binding protein EibA (392 aa).

An N-terminal signal peptide occupies residues 1–27 (MSKKFTKAVLSAAMAGVLFGVSFDIMA). A surface exposed passenger domain region spans residues 28 to 301 (AEQSYSALNA…IAANTRTLQQ (274 aa)). The Extracellular segment spans residues 28-341 (AEQSYSALNA…GLFQPYSVGK (314 aa)). Residues 174–215 (ESANSTIVANELEAQKGKLDAQKGELEAQKKNLGELTTRTDK) adopt a coiled-coil conformation. Residues 187 to 230 (AQKGKLDAQKGELEAQKKNLGELTTRTDKIDAAAAATAAKVESR) form a right-handed coiled-coil (RHcc) region. The interval 231–256 (TLVGVSSDGTLTRAEGAKNTISVNDG) is saddle domain. Residues 257–322 (LVALSGRTDR…INENHKEMKR (66 aa)) form a left-handed coiled-coil (LHcc) region. Residues 299 to 341 (LQQHSARLDSQQRQINENHKEMKRAAAQSAALTGLFQPYSVGK) are outer membrane translocation of the passenger domain. A run of 4 beta stranded transmembrane segments spans residues 342-352 (FNASAAVGGYS), 355-366 (QALAVGVGYRFN), 369-378 (TAAKAGVAFS), and 382-392 (ASWNVGVNFEF). The tract at residues 342 to 392 (FNASAAVGGYSDEQALAVGVGYRFNEQTAAKAGVAFSDGDASWNVGVNFEF) is translocator domain.

The protein belongs to the autotransporter-2 (AT-2) (TC 1.B.40) family. Eib subfamily. Homotrimer; can probably form mixed heterotrimers in vivo. Will form mixed heterotrimers with EibD; these are correctly located in the outer membrane and bind IgG Fc, although less well than homotrimers. Does not form trimers with distantly related YadA from Y.enterocolitica; coexpression was lethal and one of the genes is eliminated in vivo. If the full translocator domain (299-392) is exchanged with that of YadA ('368-455'), will form heterotrimers with YadA and vice-versa. In denaturing gels runs as 2 bands of about 121 and 131 kDa; extracting the sample with 88% phenol at 70 degrees Celsius reduces part of the signal to about 45 kDa. Binds the Fc portion of IgG; binds more than 1 Fc per subunit.

The protein resides in the cell surface. It is found in the cell outer membrane. Functionally, binds (in a non-immune fashion) to the Fc portion of human IgG but not IgA; binding occurs on the cell surface. Confers the ability to survive exposure to human serum exposure. Binds to the Fc portion of human IgG and to whole mouse antibodies also via Fc, binds more than 1 Fc or IgG. The chain is Immunoglobulin-binding protein EibA from Escherichia coli.